The sequence spans 89 residues: Small ribosomal subunit protein uS15 (89 aa).

This sequence belongs to the universal ribosomal protein uS15 family. In terms of assembly, part of the 30S ribosomal subunit. Forms a bridge to the 50S subunit in the 70S ribosome, contacting the 23S rRNA.

Its function is as follows. One of the primary rRNA binding proteins, it binds directly to 16S rRNA where it helps nucleate assembly of the platform of the 30S subunit by binding and bridging several RNA helices of the 16S rRNA. Functionally, forms an intersubunit bridge (bridge B4) with the 23S rRNA of the 50S subunit in the ribosome. This is Small ribosomal subunit protein uS15 from Chlamydia muridarum (strain MoPn / Nigg).